We begin with the raw amino-acid sequence, 390 residues long: Protein-glutamate methylesterase/protein-glutamine glutaminase 1 (390 aa).

Residues 4–121 (KVLVVDDSGF…SRNPQKVKQL (118 aa)) form the Response regulatory domain. At Asp55 the chain carries 4-aspartylphosphate. Residues 132–186 (SNRRSSGIGSASAASPAPAAPAPSTLSSRAPAPSAAAPARAVPSRTVAPAAAPAA) are compositionally biased toward low complexity. The disordered stretch occupies residues 132 to 201 (SNRRSSGIGS…PAHPTTTGTA (70 aa)). In terms of domain architecture, CheB-type methylesterase spans 195–387 (PTTTGTAKRK…LDDIGRHLVE (193 aa)). Residues Ser214, His241, and Asp334 contribute to the active site.

It belongs to the CheB family. Phosphorylated by CheA. Phosphorylation of the N-terminal regulatory domain activates the methylesterase activity.

Its subcellular location is the cytoplasm. It carries out the reaction [protein]-L-glutamate 5-O-methyl ester + H2O = L-glutamyl-[protein] + methanol + H(+). The catalysed reaction is L-glutaminyl-[protein] + H2O = L-glutamyl-[protein] + NH4(+). Involved in chemotaxis. Part of a chemotaxis signal transduction system that modulates chemotaxis in response to various stimuli. Catalyzes the demethylation of specific methylglutamate residues introduced into the chemoreceptors (methyl-accepting chemotaxis proteins or MCP) by CheR. Also mediates the irreversible deamidation of specific glutamine residues to glutamic acid. The sequence is that of Protein-glutamate methylesterase/protein-glutamine glutaminase 1 from Pseudomonas syringae pv. tomato (strain ATCC BAA-871 / DC3000).